The following is an 88-amino-acid chain: Small ribosomal subunit protein bS20 (88 aa).

The segment at 1–23 (MANSPQAKKRARQNDKARAHNAS) is disordered.

Belongs to the bacterial ribosomal protein bS20 family.

Its function is as follows. Binds directly to 16S ribosomal RNA. The chain is Small ribosomal subunit protein bS20 from Teredinibacter turnerae (strain ATCC 39867 / T7901).